Consider the following 206-residue polypeptide: Nucleoside triphosphate pyrophosphatase (206 aa).

The active-site Proton acceptor is D78.

It belongs to the Maf family. A divalent metal cation is required as a cofactor.

The protein resides in the cytoplasm. The catalysed reaction is a ribonucleoside 5'-triphosphate + H2O = a ribonucleoside 5'-phosphate + diphosphate + H(+). It carries out the reaction a 2'-deoxyribonucleoside 5'-triphosphate + H2O = a 2'-deoxyribonucleoside 5'-phosphate + diphosphate + H(+). Nucleoside triphosphate pyrophosphatase. May have a dual role in cell division arrest and in preventing the incorporation of modified nucleotides into cellular nucleic acids. This Prochlorococcus marinus (strain MIT 9312) protein is Nucleoside triphosphate pyrophosphatase.